The sequence spans 86 residues: Neurotoxin LmNaTx34.1 (86 aa).

Residues 1-18 (MKTVILVVIALMVIEVQG) form the signal peptide. In terms of domain architecture, LCN-type CS-alpha/beta spans 19-85 (DGYLMVRAGI…IWTYEKNTCS (67 aa)). Intrachain disulfides connect C32/C84, C36/C57, C43/C64, and C47/C66.

This sequence belongs to the long (4 C-C) scorpion toxin superfamily. Sodium channel inhibitor family. Beta subfamily. In terms of tissue distribution, expressed by the venom gland.

Its subcellular location is the secreted. In terms of biological role, binds voltage-independently at site-4 of sodium channels (Nav) and shift the voltage of activation toward more negative potentials thereby affecting sodium channel activation and promoting spontaneous and repetitive firing. This chain is Neurotoxin LmNaTx34.1, found in Lychas mucronatus (Chinese swimming scorpion).